A 508-amino-acid polypeptide reads, in one-letter code: Gasdermin-C (508 aa).

Residues 1–257 (MPSMLERISK…VGYCAARSEG (257 aa)) are triggers pyroptosis.

It belongs to the gasdermin family. As to quaternary structure, homooligomer; homooligomeric ring-shaped pore complex containing 27-28 subunits when inserted in the membrane. Cleavage by CASP8 relieves autoinhibition by releasing the N-terminal moiety (Gasdermin-C, N-terminal) that initiates pyroptosis. The cleavage site is unclear. According to a publication, it takes place after Asp-240 in response to alpha-ketoglutarate. Another paper reports cleavage by CASP8 after Asp-365. Post-translationally, palmitoylated. Expressed mainly in trachea and spleen. In the esophagus, expressed in differentiating cells and probably in differentiated cells. Also detected in gastric epithelium.

The protein resides in the cytoplasm. It is found in the cytosol. Its subcellular location is the cell membrane. The full-length protein before cleavage is inactive: intramolecular interactions between N- and C-terminal domains mediate autoinhibition in the absence of activation signal. The intrinsic pyroptosis-inducing activity is carried by the released N-terminal moiety (Gasdermin-C, N-terminal) following cleavage by caspase CASP8. In terms of biological role, this form constitutes the precursor of the pore-forming protein: upon cleavage, the released N-terminal moiety (Gasdermin-C, N-terminal) binds to membranes and forms pores, triggering pyroptosis. Pore-forming protein that causes membrane permeabilization and pyroptosis. Produced by the cleavage of gasdermin-C by caspase CASP8 in response to death signals. After cleavage, moves to the plasma membrane where it strongly binds to membrane inner leaflet lipids. Homooligomerizes within the membrane and forms pores of 10-15 nanometers (nm) of inner diameter, triggering pyroptosis. This chain is Gasdermin-C, found in Homo sapiens (Human).